Reading from the N-terminus, the 147-residue chain is Diaminohydroxyphosphoribosylamino-pyrimidine deaminase (147 aa).

Positions 1–122 constitute a CMP/dCMP-type deaminase domain; that stretch reads MKDRFYMTRA…LYLRKKGISV (122 aa). H50 is a Zn(2+) binding site. The active-site Proton donor is E52. Residues C75 and C84 each contribute to the Zn(2+) site.

It belongs to the cytidine and deoxycytidylate deaminase family. Zn(2+) is required as a cofactor.

The catalysed reaction is 2,5-diamino-6-hydroxy-4-(5-phosphoribosylamino)-pyrimidine + H2O + H(+) = 5-amino-6-(5-phospho-D-ribosylamino)uracil + NH4(+). The protein operates within cofactor biosynthesis; riboflavin biosynthesis; 5-amino-6-(D-ribitylamino)uracil from GTP: step 2/4. In Buchnera aphidicola subsp. Schizaphis graminum (strain Sg), this protein is Diaminohydroxyphosphoribosylamino-pyrimidine deaminase (ribD1).